The sequence spans 395 residues: Elongation factor Tu (395 aa).

The region spanning 10–204 is the tr-type G domain; sequence KPHLNIGTIG…AVDTWIELPE (195 aa). Residues 19 to 26 are G1; it reads GHVDHGKT. Residue 19–26 participates in GTP binding; the sequence is GHVDHGKT. T26 lines the Mg(2+) pocket. The interval 60 to 64 is G2; sequence GITIN. The segment at 81-84 is G3; the sequence is DCPG. Residues 81-85 and 136-139 each bind GTP; these read DCPGH and NKVD. The interval 136-139 is G4; it reads NKVD. Positions 174-176 are G5; it reads SAL.

It belongs to the TRAFAC class translation factor GTPase superfamily. Classic translation factor GTPase family. EF-Tu/EF-1A subfamily. Monomer.

The protein resides in the cytoplasm. It catalyses the reaction GTP + H2O = GDP + phosphate + H(+). GTP hydrolase that promotes the GTP-dependent binding of aminoacyl-tRNA to the A-site of ribosomes during protein biosynthesis. The chain is Elongation factor Tu from Christiangramia forsetii (strain DSM 17595 / CGMCC 1.15422 / KT0803) (Gramella forsetii).